The chain runs to 668 residues: Chitin synthase 8 (668 aa).

The segment covering 1-26 has biased composition (polar residues); sequence MTSRMPTSGHRTSSSSSERGNMSVQQ. Residues 1–62 form a disordered region; the sequence is MTSRMPTSGH…PAPLRPGWTL (62 aa). Asparagine 21, asparagine 98, and asparagine 101 each carry an N-linked (GlcNAc...) asparagine glycan. Helical transmembrane passes span 136–156 and 162–182; these read WSLIIGLAGINGALIYIGWKY and FFLVLLSSNTVLQSFMCICII. 2 N-linked (GlcNAc...) asparagine glycosylation sites follow: asparagine 216 and asparagine 476. Transmembrane regions (helical) follow at residues 522-542, 548-568, 583-603, and 615-635; these read WALGSISNEFVMIFRPGIILI, LIAVITWAITPFIIAAFVELL, VFLGLICVLFFRYLYSFCIGF, and YFAGYVMHLFTSPFMNIIILV.

Belongs to the chitin synthase family. Class VIII subfamily.

Its subcellular location is the cell membrane. It is found in the cell septum. The enzyme catalyses [(1-&gt;4)-N-acetyl-beta-D-glucosaminyl](n) + UDP-N-acetyl-alpha-D-glucosamine = [(1-&gt;4)-N-acetyl-beta-D-glucosaminyl](n+1) + UDP + H(+). Functionally, polymerizes chitin, a structural polymer of the cell wall and septum, by transferring the sugar moiety of UDP-GlcNAc to the non-reducing end of the growing chitin polymer. Participated in the development of cell wall and plays a critical role in fungal response to environmental stresses. Necessary for pathogenicity and deoxinivalenol (DON) production. This chain is Chitin synthase 8, found in Gibberella zeae (strain ATCC MYA-4620 / CBS 123657 / FGSC 9075 / NRRL 31084 / PH-1) (Wheat head blight fungus).